The sequence spans 381 residues: Alkanesulfonate monooxygenase (381 aa).

This sequence belongs to the SsuD family. Homotetramer.

It catalyses the reaction an alkanesulfonate + FMNH2 + O2 = an aldehyde + FMN + sulfite + H2O + 2 H(+). In terms of biological role, catalyzes the desulfonation of aliphatic sulfonates. This Escherichia coli O127:H6 (strain E2348/69 / EPEC) protein is Alkanesulfonate monooxygenase.